The primary structure comprises 404 residues: MSENKDHVVVGYTEKPVGERPTGGKFLGYDHLHFWVGNAKQAAGWYTSRFGFEYYAYKGLETGSREVATHVVRNKQGVTLAFSTPYGNDKDNQREMNQHQSLHGDGVKDVAFAVEDCHSIYNKAIQRGAKCAYPPQDLKDEHGSVTIAAVHTYGEVIHTFIQRNDYKGFFMPGFVAHPLKDPLNNVLPDISYNYVDHIVGNQPDNMMTSAADWYEKTLDFHRFWSVDDSMIHTEFSSLRSIVMTDYDQKIKMPINEPADGKRKSQIQEYIDFYAGPGVQHIALNTSDVINTVEGLRARGVEFLSIPTSYYDNLRKALTAQTSITVKEDLDVLQKNHILVDYDEKGYLLQIFTKPVEDRPTLFYEIIQRNNHQGFGAGNFKSLFVSLELEQEKRGNLTEIVKNIY.

VOC domains are found at residues 28-163 (GYDH…FIQR) and 194-353 (YVDH…IFTK). Residues His-197, His-280, and Glu-364 each contribute to the Fe cation site.

It belongs to the 4HPPD family. Fe cation is required as a cofactor.

It carries out the reaction 3-(4-hydroxyphenyl)pyruvate + O2 = homogentisate + CO2. The protein operates within amino-acid degradation; L-phenylalanine degradation; acetoacetate and fumarate from L-phenylalanine: step 3/6. Key enzyme in the degradation of tyrosine. The protein is 4-hydroxyphenylpyruvate dioxygenase (TFA) of Tetrahymena thermophila.